A 326-amino-acid chain; its full sequence is Ornithine carbamoyltransferase (326 aa).

Carbamoyl phosphate contacts are provided by residues Ser-54 to Thr-57, Gln-81, Arg-105, and His-132 to Gln-135. Residues Asn-164, Asp-225, and Ser-229–Met-230 contribute to the L-ornithine site. Carbamoyl phosphate contacts are provided by residues Cys-266 to Leu-267 and Arg-311.

This sequence belongs to the aspartate/ornithine carbamoyltransferase superfamily. OTCase family.

It is found in the cytoplasm. It carries out the reaction carbamoyl phosphate + L-ornithine = L-citrulline + phosphate + H(+). The protein operates within amino-acid biosynthesis; L-arginine biosynthesis; L-arginine from L-ornithine and carbamoyl phosphate: step 1/3. Its function is as follows. Reversibly catalyzes the transfer of the carbamoyl group from carbamoyl phosphate (CP) to the N(epsilon) atom of ornithine (ORN) to produce L-citrulline. The sequence is that of Ornithine carbamoyltransferase (argF) from Streptococcus mutans serotype c (strain ATCC 700610 / UA159).